The following is a 402-amino-acid chain: UPF0597 protein THA_1286 (402 aa).

The protein belongs to the UPF0597 family.

This is UPF0597 protein THA_1286 from Thermosipho africanus (strain TCF52B).